Here is a 155-residue protein sequence, read N- to C-terminus: Probable calcium-binding protein CML44 (155 aa).

EF-hand domains lie at 6–41, 85–120, and 130–155; these read ITTN…LGWA, DNDE…LGFE, and RMIR…ILHV. Ca(2+) contacts are provided by Asp19, Asn21, Asp23, Glu30, Asp98, Asn100, Asp102, Tyr104, and Glu109.

Potential calcium sensor. In Arabidopsis thaliana (Mouse-ear cress), this protein is Probable calcium-binding protein CML44 (CML44).